The chain runs to 325 residues: Apoptosis-enhancing nuclease (325 aa).

The Nucleolar localization signal motif lies at 27 to 35; it reads RKRHKRRSR. Residues 53–105 are disordered; it reads LSMPPEPGSSPLPTPFGAVTATEDASSGKQCPRAGSGGAPCSRRPAPGKASGP. Positions 56 to 66 are enriched in pro residues; the sequence is PPEPGSSPLPT. An Exonuclease domain is found at 110–266; the sequence is CVAIDCEMVG…EDATTAMELY (157 aa). The Nuclear localization signal motif lies at 165 to 188; the sequence is RQHMCKAIPFQVAQKEILKLLKGK. The tract at residues 281-325 is disordered; that stretch reads LWTCPEDREPDSSTDMEQYMEDQYWPDDLAHGSRGGAREAQDRRN. Residues 308–325 show a composition bias toward basic and acidic residues; the sequence is DLAHGSRGGAREAQDRRN.

The protein localises to the nucleus. The protein resides in the nucleolus. Exonuclease with activity against single- and double-stranded DNA and RNA. Mediates p53-induced apoptosis. When induced by p53 following DNA damage, digests double-stranded DNA to form single-stranded DNA and amplifies DNA damage signals, leading to enhancement of apoptosis. This is Apoptosis-enhancing nuclease (AEN) from Pongo abelii (Sumatran orangutan).